Reading from the N-terminus, the 421-residue chain is 3-phosphoshikimate 1-carboxyvinyltransferase (421 aa).

Lys19, Ser20, and Arg24 together coordinate 3-phosphoshikimate. Residue Lys19 participates in phosphoenolpyruvate binding. Residues Gly88 and Arg116 each coordinate phosphoenolpyruvate. 3-phosphoshikimate contacts are provided by Ser160, Gln162, Asp307, and Lys334. A phosphoenolpyruvate-binding site is contributed by Gln162. Asp307 acts as the Proton acceptor in catalysis. Residues Arg338 and Arg380 each coordinate phosphoenolpyruvate.

It belongs to the EPSP synthase family. Monomer.

It is found in the cytoplasm. The catalysed reaction is 3-phosphoshikimate + phosphoenolpyruvate = 5-O-(1-carboxyvinyl)-3-phosphoshikimate + phosphate. Its pathway is metabolic intermediate biosynthesis; chorismate biosynthesis; chorismate from D-erythrose 4-phosphate and phosphoenolpyruvate: step 6/7. Catalyzes the transfer of the enolpyruvyl moiety of phosphoenolpyruvate (PEP) to the 5-hydroxyl of shikimate-3-phosphate (S3P) to produce enolpyruvyl shikimate-3-phosphate and inorganic phosphate. The polypeptide is 3-phosphoshikimate 1-carboxyvinyltransferase (Thermotoga neapolitana (strain ATCC 49049 / DSM 4359 / NBRC 107923 / NS-E)).